Here is a 62-residue protein sequence, read N- to C-terminus: Potassium channel toxin gamma-KTx 1.1 (62 aa).

Positions 1 to 20 are cleaved as a signal peptide; the sequence is MKVLILIMIIASLMIMGVEM. 4 disulfide bridges follow: Cys25/Cys43, Cys31/Cys54, Cys40/Cys59, and Cys44/Cys61.

It belongs to the ergtoxin family. Gamma-KTx 1 subfamily. In terms of processing, after protein storage at -20 Celsius degrees during a couple of months, the Met-55 of a small number of toxins is naturally oxidized. This oxidized form is about three orders of magnitude less efficient (IC(50)=15 uM) than non-oxidized form. In terms of tissue distribution, expressed by the venom gland.

It is found in the secreted. Blocks human and rat Kv11.1/KCNH2/ERG1 and Kv11.3/KCNH7/ERG3, as well as rat (but not human) Kv11.2/KCNH6/ERG2 by binding to channel outer vestibule (S5P domain) with a 1:1 stoichiometry. Inhibition data are the following: hERG1 (reversible, IC(50)~7 nM), rERG1 (reversible, Kd=6.8 nM), rERG2 (irreversible, Kd=2.8 nM), hERG3 (irreversible, Kd=4.05 nM) and rERG3 (reversible, Kd=38.1 nM) potassium channels. The toxin potency is not affected by elevating potassium ion concentration from 2 to 98 mM. This toxin only blocks channels in a closed state. At high toxin concentrations, block of Kv11.1/KCNH2/ERG1 macroscopic current is incomplete (93.5%). This suggests a kinetic mechanism model with two different states of toxin-channel binding (T+C=TC*=TC; in the TC* state, the toxin binds the channel but does not occlude the pore, whereas in the TC state the toxin binds and occludes the pore). In this model, incomplete block is explained by the relatively fast dissociation rate from the blocked channel conformation (TC) relative to the rate of conversion of the toxin-channel encounter complex (TC*) to the blocked channel conformation (TC). The polypeptide is Potassium channel toxin gamma-KTx 1.1 (Centruroides noxius (Mexican scorpion)).